Reading from the N-terminus, the 343-residue chain is UDP-glucuronic acid decarboxylase 6 (343 aa).

A disordered region spans residues 1–22 (MASNSSNGTTTTKPPPMPSPLR). Alanine 2 carries the post-translational modification N-acetylalanine. Residue 62–87 (DNYFTGSKDNLKKWIGHPRFELIRHD) participates in NAD(+) binding. Position 171 (arginine 171) interacts with substrate. Tyrosine 174 (proton acceptor) is an active-site residue. 174-178 (YDEGK) provides a ligand contact to NAD(+). A substrate-binding site is contributed by asparagine 203. Arginine 215 is an NAD(+) binding site. Residues 216-220 (VVSNF), 233-240 (QKPGTQTR), and 300-304 (DPRQR) each bind substrate.

Belongs to the NAD(P)-dependent epimerase/dehydratase family. UDP-glucuronic acid decarboxylase subfamily. The cofactor is NAD(+).

It localises to the cytoplasm. It catalyses the reaction UDP-alpha-D-glucuronate + H(+) = UDP-alpha-D-xylose + CO2. Its pathway is nucleotide-sugar biosynthesis; UDP-alpha-D-xylose biosynthesis; UDP-alpha-D-xylose from UDP-alpha-D-glucuronate: step 1/1. Its function is as follows. Catalyzes the NAD-dependent decarboxylation of UDP-glucuronic acid to UDP-xylose. Necessary for the biosynthesis of the core tetrasaccharide in glycosaminoglycan biosynthesis. This is UDP-glucuronic acid decarboxylase 6 (UXS6) from Arabidopsis thaliana (Mouse-ear cress).